The sequence spans 230 residues: ATP phosphoribosyltransferase (230 aa).

This sequence belongs to the ATP phosphoribosyltransferase family. Short subfamily. As to quaternary structure, heteromultimer composed of HisG and HisZ subunits.

It is found in the cytoplasm. The enzyme catalyses 1-(5-phospho-beta-D-ribosyl)-ATP + diphosphate = 5-phospho-alpha-D-ribose 1-diphosphate + ATP. Its pathway is amino-acid biosynthesis; L-histidine biosynthesis; L-histidine from 5-phospho-alpha-D-ribose 1-diphosphate: step 1/9. In terms of biological role, catalyzes the condensation of ATP and 5-phosphoribose 1-diphosphate to form N'-(5'-phosphoribosyl)-ATP (PR-ATP). Has a crucial role in the pathway because the rate of histidine biosynthesis seems to be controlled primarily by regulation of HisG enzymatic activity. The protein is ATP phosphoribosyltransferase (hisG) of Chelativorans sp. (strain BNC1).